A 526-amino-acid polypeptide reads, in one-letter code: Amino acid transporter AVT1E (526 aa).

The interval 1–49 is disordered; it reads MKQNETFDQEREDLYHTFDEEDEESQTESSVPSTPLSRNRSEDVPVPWP. Positions 8–18 are enriched in basic and acidic residues; that stretch reads DQEREDLYHTF. A run of 11 helical transmembrane segments spans residues 140-160, 165-185, 212-232, 253-273, 278-298, 320-340, 353-373, 397-417, 436-456, 458-478, and 494-514; these read SVLN…PYAV, WLGL…GILL, ILVS…YIIM, LDST…TVWL, LLSY…LCLF, IPVA…FPNI, VLLI…VCGF, IAVW…ITPV, GVSM…ALTV, FFAT…ALIF, and FQIG…CCGT.

It belongs to the amino acid/polyamine transporter 2 family. Amino acid/auxin permease (AAAP) (TC 2.A.18.5) subfamily.

It localises to the membrane. The sequence is that of Amino acid transporter AVT1E from Arabidopsis thaliana (Mouse-ear cress).